Here is a 391-residue protein sequence, read N- to C-terminus: Tryptophan synthase beta chain 2 (391 aa).

Lys-83 is subject to N6-(pyridoxal phosphate)lysine.

This sequence belongs to the TrpB family. Tetramer of two alpha and two beta chains. Pyridoxal 5'-phosphate serves as cofactor.

It carries out the reaction (1S,2R)-1-C-(indol-3-yl)glycerol 3-phosphate + L-serine = D-glyceraldehyde 3-phosphate + L-tryptophan + H2O. It functions in the pathway amino-acid biosynthesis; L-tryptophan biosynthesis; L-tryptophan from chorismate: step 5/5. Its function is as follows. The beta subunit is responsible for the synthesis of L-tryptophan from indole and L-serine. This chain is Tryptophan synthase beta chain 2 (trpB2), found in Chlamydia caviae (strain ATCC VR-813 / DSM 19441 / 03DC25 / GPIC) (Chlamydophila caviae).